The following is a 266-amino-acid chain: Family of serine hydrolases 3 (266 aa).

Active-site charge relay system residues include Ser117, Asp180, and His209.

This sequence belongs to the AB hydrolase 3 family.

Its function is as follows. Serine hydrolase of unknown specificity. The chain is Family of serine hydrolases 3 (FSH3) from Saccharomyces cerevisiae (strain ATCC 204508 / S288c) (Baker's yeast).